We begin with the raw amino-acid sequence, 282 residues long: NH(3)-dependent NAD(+) synthetase (282 aa).

An ATP-binding site is contributed by 51 to 58; the sequence is GISGGVDS. Residue Asp-57 participates in Mg(2+) binding. Arg-148 contacts deamido-NAD(+). Position 168 (Thr-168) interacts with ATP. Glu-173 provides a ligand contact to Mg(2+). Residues Lys-181 and Asp-188 each coordinate deamido-NAD(+). Lys-197 and Thr-219 together coordinate ATP. 268 to 269 contacts deamido-NAD(+); sequence HK.

This sequence belongs to the NAD synthetase family. As to quaternary structure, homodimer.

The enzyme catalyses deamido-NAD(+) + NH4(+) + ATP = AMP + diphosphate + NAD(+) + H(+). It functions in the pathway cofactor biosynthesis; NAD(+) biosynthesis; NAD(+) from deamido-NAD(+) (ammonia route): step 1/1. Catalyzes the ATP-dependent amidation of deamido-NAD to form NAD. Uses ammonia as a nitrogen source. The polypeptide is NH(3)-dependent NAD(+) synthetase (Burkholderia cenocepacia (strain HI2424)).